The following is a 205-amino-acid chain: Glycerol-3-phosphate acyltransferase (205 aa).

6 helical membrane-spanning segments follow: residues 5 to 25, 54 to 74, 87 to 107, 117 to 137, 138 to 158, and 162 to 182; these read LALGIWAASYLAGSLPAGYLA, GPAAAVLLFDVFKGLFAVWLA, IVLGAGLAAIVGHSWPVWLAF, VGLLLGMHWPVALTVAAVWGV, CFAVTRIVSFASIVAAAATPL, and LWRAPLPFTLFGLLGGIYIVW.

Belongs to the PlsY family. As to quaternary structure, probably interacts with PlsX.

The protein resides in the cell inner membrane. It catalyses the reaction an acyl phosphate + sn-glycerol 3-phosphate = a 1-acyl-sn-glycero-3-phosphate + phosphate. It participates in lipid metabolism; phospholipid metabolism. Functionally, catalyzes the transfer of an acyl group from acyl-phosphate (acyl-PO(4)) to glycerol-3-phosphate (G3P) to form lysophosphatidic acid (LPA). This enzyme utilizes acyl-phosphate as fatty acyl donor, but not acyl-CoA or acyl-ACP. This Gloeobacter violaceus (strain ATCC 29082 / PCC 7421) protein is Glycerol-3-phosphate acyltransferase.